The sequence spans 118 residues: Large ribosomal subunit protein uL24c (118 aa).

This sequence belongs to the universal ribosomal protein uL24 family. In terms of assembly, part of the 50S ribosomal subunit.

The protein localises to the plastid. It is found in the organellar chromatophore. Functionally, one of two assembly initiator proteins, it binds directly to the 5'-end of the 23S rRNA, where it nucleates assembly of the 50S subunit. This chain is Large ribosomal subunit protein uL24c (rpl24), found in Paulinella chromatophora.